A 101-amino-acid chain; its full sequence is NAD(P)H-quinone oxidoreductase subunit 4L, chloroplastic (101 aa).

Transmembrane regions (helical) follow at residues 2-22 (MLEH…YGLI), 32-52 (MCLE…SDLF), and 61-81 (IFSI…PAIV).

The protein belongs to the complex I subunit 4L family. In terms of assembly, NDH is composed of at least 16 different subunits, 5 of which are encoded in the nucleus.

The protein resides in the plastid. It is found in the chloroplast thylakoid membrane. The catalysed reaction is a plastoquinone + NADH + (n+1) H(+)(in) = a plastoquinol + NAD(+) + n H(+)(out). The enzyme catalyses a plastoquinone + NADPH + (n+1) H(+)(in) = a plastoquinol + NADP(+) + n H(+)(out). In terms of biological role, NDH shuttles electrons from NAD(P)H:plastoquinone, via FMN and iron-sulfur (Fe-S) centers, to quinones in the photosynthetic chain and possibly in a chloroplast respiratory chain. The immediate electron acceptor for the enzyme in this species is believed to be plastoquinone. Couples the redox reaction to proton translocation, and thus conserves the redox energy in a proton gradient. This chain is NAD(P)H-quinone oxidoreductase subunit 4L, chloroplastic, found in Chloranthus spicatus (Chulantree).